A 231-amino-acid polypeptide reads, in one-letter code: Large ribosomal subunit protein uL1 (231 aa).

This sequence belongs to the universal ribosomal protein uL1 family. As to quaternary structure, part of the 50S ribosomal subunit.

In terms of biological role, binds directly to 23S rRNA. The L1 stalk is quite mobile in the ribosome, and is involved in E site tRNA release. Functionally, protein L1 is also a translational repressor protein, it controls the translation of the L11 operon by binding to its mRNA. The sequence is that of Large ribosomal subunit protein uL1 from Stutzerimonas stutzeri (strain A1501) (Pseudomonas stutzeri).